We begin with the raw amino-acid sequence, 363 residues long: Anhydro-N-acetylmuramic acid kinase (363 aa).

10 to 17 (GTSLDGMD) serves as a coordination point for ATP.

Belongs to the anhydro-N-acetylmuramic acid kinase family.

It carries out the reaction 1,6-anhydro-N-acetyl-beta-muramate + ATP + H2O = N-acetyl-D-muramate 6-phosphate + ADP + H(+). The protein operates within amino-sugar metabolism; 1,6-anhydro-N-acetylmuramate degradation. It participates in cell wall biogenesis; peptidoglycan recycling. In terms of biological role, catalyzes the specific phosphorylation of 1,6-anhydro-N-acetylmuramic acid (anhMurNAc) with the simultaneous cleavage of the 1,6-anhydro ring, generating MurNAc-6-P. Is required for the utilization of anhMurNAc either imported from the medium or derived from its own cell wall murein, and thus plays a role in cell wall recycling. Contributes to intrinsic fosfomycin resistance in P.aeruginosa. This is Anhydro-N-acetylmuramic acid kinase from Pseudomonas aeruginosa (strain ATCC 15692 / DSM 22644 / CIP 104116 / JCM 14847 / LMG 12228 / 1C / PRS 101 / PAO1).